The following is a 291-amino-acid chain: Urease accessory protein UreD (291 aa).

Belongs to the UreD family. In terms of assembly, ureD, UreF and UreG form a complex that acts as a GTP-hydrolysis-dependent molecular chaperone, activating the urease apoprotein by helping to assemble the nickel containing metallocenter of UreC. The UreE protein probably delivers the nickel.

The protein resides in the cytoplasm. Functionally, required for maturation of urease via the functional incorporation of the urease nickel metallocenter. This is Urease accessory protein UreD from Polynucleobacter asymbioticus (strain DSM 18221 / CIP 109841 / QLW-P1DMWA-1) (Polynucleobacter necessarius subsp. asymbioticus).